Here is a 287-residue protein sequence, read N- to C-terminus: Elongation factor Ts (287 aa).

The tract at residues 80-83 is involved in Mg(2+) ion dislocation from EF-Tu; it reads TDFL.

This sequence belongs to the EF-Ts family.

The protein localises to the cytoplasm. Associates with the EF-Tu.GDP complex and induces the exchange of GDP to GTP. It remains bound to the aminoacyl-tRNA.EF-Tu.GTP complex up to the GTP hydrolysis stage on the ribosome. The sequence is that of Elongation factor Ts from Pseudomonas syringae pv. tomato (strain ATCC BAA-871 / DC3000).